Reading from the N-terminus, the 372-residue chain is MLDISLIMLGAGNSSRFELPVKKQWLRIGSDPLWLFATKNLSNFYTFKEIIVVSKECKYMSKFAPNYKFVDGGETRQDSLKNALELVSSEFVLVSDIARPCISSELFHKIIEAAAQADCVVPALKIADTAYLGENAIDREKVKLIQTPQLSRTTLLKKALSSGEIYTDDSSAMRAIGASVWHILGDEMARKITFKEDLVKISALKAPENELFVGSGFDVHEFEKGRPLVLCGEKIDYEFGLKAHSDGDVALHALTDAILGAAGLGDIGELFPDTDDKFKDISSIYLLQEAYKRVQSVGFVLTNADITIMAQKPKLSKLKSKMEANIAQALNLSQSRINVKATTTEGLGFVGRCEGIAVMASASLKFYNWTQI.

The interval 1-211 (MLDISLIMLG…SALKAPENEL (211 aa)) is 2-C-methyl-D-erythritol 4-phosphate cytidylyltransferase. The tract at residues 212–372 (FVGSGFDVHE…SLKFYNWTQI (161 aa)) is 2-C-methyl-D-erythritol 2,4-cyclodiphosphate synthase. 2 residues coordinate a divalent metal cation: Asp-218 and His-220. Residues 218 to 220 (DVH) and 244 to 245 (HS) each bind 4-CDP-2-C-methyl-D-erythritol 2-phosphate. Residue His-252 coordinates a divalent metal cation. 4-CDP-2-C-methyl-D-erythritol 2-phosphate contacts are provided by residues 266 to 268 (DIG), 271 to 275 (FPDTD), 342 to 345 (TTTE), Phe-349, and Arg-352.

It in the N-terminal section; belongs to the IspD/TarI cytidylyltransferase family. IspD subfamily. The protein in the C-terminal section; belongs to the IspF family. A divalent metal cation is required as a cofactor.

It carries out the reaction 2-C-methyl-D-erythritol 4-phosphate + CTP + H(+) = 4-CDP-2-C-methyl-D-erythritol + diphosphate. It catalyses the reaction 4-CDP-2-C-methyl-D-erythritol 2-phosphate = 2-C-methyl-D-erythritol 2,4-cyclic diphosphate + CMP. It functions in the pathway isoprenoid biosynthesis; isopentenyl diphosphate biosynthesis via DXP pathway; isopentenyl diphosphate from 1-deoxy-D-xylulose 5-phosphate: step 2/6. The protein operates within isoprenoid biosynthesis; isopentenyl diphosphate biosynthesis via DXP pathway; isopentenyl diphosphate from 1-deoxy-D-xylulose 5-phosphate: step 4/6. In terms of biological role, bifunctional enzyme that catalyzes the formation of 4-diphosphocytidyl-2-C-methyl-D-erythritol from CTP and 2-C-methyl-D-erythritol 4-phosphate (MEP) (IspD), and catalyzes the conversion of 4-diphosphocytidyl-2-C-methyl-D-erythritol 2-phosphate (CDP-ME2P) to 2-C-methyl-D-erythritol 2,4-cyclodiphosphate (ME-CPP) with a corresponding release of cytidine 5-monophosphate (CMP) (IspF). The sequence is that of Bifunctional enzyme IspD/IspF from Campylobacter concisus (strain 13826).